Consider the following 718-residue polypeptide: Receptor-like protein 36 (718 aa).

The first 26 residues, 1 to 26, serve as a signal peptide directing secretion; sequence MIRSLSYCFLTIYFFLSILPLPNTIA. At 27-695 the chain is on the extracellular side; it reads CPTRLLCRSD…SESEDQLLNW (669 aa). 18 LRR repeats span residues 70–94, 95–118, 120–141, 143–165, 166–188, 189–213, 214–238, 239–261, 262–286, 288–310, 312–334, 335–359, 360–383, 384–406, 407–431, 433–454, 455–480, and 481–505; these read DAIL…IGNL, SHLT…IGNL, QLES…SFAN, TKLS…LANL, TSLS…DLSG, LHNL…LLMI, PSLV…TFSL, SRLR…SISK, LVNL…ISKV, NLTS…VWRS, KLDY…EVID, GASL…ICKV, KDLY…LKYS, TYFH…LFIK, DSQL…LINC, RIEF…WLGS, LPYL…AYLG, and FPSI…YFAN. An N-linked (GlcNAc...) asparagine glycan is attached at Asn93. 2 N-linked (GlcNAc...) asparagine glycosylation sites follow: Asn141 and Asn164. Residue Asn199 is glycosylated (N-linked (GlcNAc...) asparagine). An N-linked (GlcNAc...) asparagine glycan is attached at Asn288. N-linked (GlcNAc...) asparagine glycosylation is found at Asn373 and Asn393. Asn528 carries N-linked (GlcNAc...) asparagine glycosylation. LRR repeat units lie at residues 550–574, 575–598, 599–622, and 624–647; these read FEGF…IGLL, SELR…LANI, TNLE…LGKL, and FLSN…QFAT. Asn581, Asn597, Asn610, Asn629, and Asn649 each carry an N-linked (GlcNAc...) asparagine glycan. Residues 696 to 716 traverse the membrane as a helical segment; it reads IAAAIAFGPGMFCGLVIGHIF. Residues 717–718 lie on the Cytoplasmic side of the membrane; that stretch reads TS.

This sequence belongs to the RLP family.

The protein localises to the cell membrane. This chain is Receptor-like protein 36, found in Arabidopsis thaliana (Mouse-ear cress).